The following is a 65-amino-acid chain: Large ribosomal subunit protein bL35 (65 aa).

Belongs to the bacterial ribosomal protein bL35 family.

In Neisseria meningitidis serogroup A / serotype 4A (strain DSM 15465 / Z2491), this protein is Large ribosomal subunit protein bL35.